Here is a 508-residue protein sequence, read N- to C-terminus: Protein S-acyltransferase 18 (508 aa).

The next 2 membrane-spanning stretches (helical) occupy residues 17–37 (IVGAVIYSVLVAAFYVFLGFF) and 42–62 (IAVIALLSVFSSVAVSVIVLF). Positions 158–208 (SYCSLCDLEVKRSSKHCRTCNRCVEGFDHHCRWLNNCVGKKNYTTFILLMV) constitute a DHHC domain. Cys-188 serves as the catalytic S-palmitoyl cysteine intermediate. The next 2 membrane-spanning stretches (helical) occupy residues 203-223 (FILLMVFVLLMLIIEGGTALA) and 250-270 (WALATISIILVLFTAYGSAAM). A disordered region spans residues 443 to 468 (VSPGRFSSPRRRFSGSSSSTVPSPKQ). The segment covering 456–466 (SGSSSSTVPSP) has biased composition (low complexity).

It belongs to the DHHC palmitoyltransferase family.

Its subcellular location is the endoplasmic reticulum membrane. It localises to the cytoplasmic vesicle membrane. It carries out the reaction L-cysteinyl-[protein] + hexadecanoyl-CoA = S-hexadecanoyl-L-cysteinyl-[protein] + CoA. In terms of biological role, S-acyltransferase involved in protein lipid modification. The chain is Protein S-acyltransferase 18 (PAT18) from Arabidopsis thaliana (Mouse-ear cress).